Reading from the N-terminus, the 239-residue chain is Fatty acid metabolism regulator protein (239 aa).

The HTH gntR-type domain maps to 6–74 (QSPAGFAEEY…HGKPTKVNNF (69 aa)). The segment at residues 34-53 (ERELSELIGVTRTTLREVLQ) is a DNA-binding region (H-T-H motif).

Homodimer.

The protein localises to the cytoplasm. Multifunctional regulator of fatty acid metabolism. This Escherichia fergusonii (strain ATCC 35469 / DSM 13698 / CCUG 18766 / IAM 14443 / JCM 21226 / LMG 7866 / NBRC 102419 / NCTC 12128 / CDC 0568-73) protein is Fatty acid metabolism regulator protein.